A 339-amino-acid polypeptide reads, in one-letter code: Glycerol-3-phosphate dehydrogenase [NAD(P)+] (339 aa).

Positions 15, 16, 36, and 110 each coordinate NADPH. Residues lysine 110, glycine 139, and threonine 141 each coordinate sn-glycerol 3-phosphate. Alanine 143 lines the NADPH pocket. Positions 195, 248, 258, 259, and 260 each coordinate sn-glycerol 3-phosphate. The active-site Proton acceptor is the lysine 195. Arginine 259 contacts NADPH. Positions 283 and 285 each coordinate NADPH.

The protein belongs to the NAD-dependent glycerol-3-phosphate dehydrogenase family.

The protein localises to the cytoplasm. The enzyme catalyses sn-glycerol 3-phosphate + NAD(+) = dihydroxyacetone phosphate + NADH + H(+). It carries out the reaction sn-glycerol 3-phosphate + NADP(+) = dihydroxyacetone phosphate + NADPH + H(+). It functions in the pathway membrane lipid metabolism; glycerophospholipid metabolism. Its function is as follows. Catalyzes the reduction of the glycolytic intermediate dihydroxyacetone phosphate (DHAP) to sn-glycerol 3-phosphate (G3P), the key precursor for phospholipid synthesis. This Cronobacter sakazakii (strain ATCC BAA-894) (Enterobacter sakazakii) protein is Glycerol-3-phosphate dehydrogenase [NAD(P)+].